Here is a 532-residue protein sequence, read N- to C-terminus: Transcriptional regulatory protein RtcR (532 aa).

Positions 186 to 424 (IATRNPHFNR…LSASVTRMAT (239 aa)) constitute a Sigma-54 factor interaction domain. ATP contacts are provided by residues 215 to 222 (GPTGAGKS) and 281 to 290 (ANGGMLFLDE). The segment at residues 485 to 504 (KSLSAAGRQLFDVSRQGKAS) is a DNA-binding region (H-T-H motif).

Transcriptional repressor of the rtcAB genes. Interacts with sigma-54. The sequence is that of Transcriptional regulatory protein RtcR (rtcR) from Escherichia coli (strain K12).